The following is a 353-amino-acid chain: Thiamine-phosphate synthase (353 aa).

Positions Met-1–Gly-128 are unknown. The interval Leu-129–Ala-353 is thiamine-phosphate synthase. 4-amino-2-methyl-5-(diphosphooxymethyl)pyrimidine-binding positions include Gln-185–Lys-189 and Asn-217. Mg(2+) is bound by residues Asp-218 and Asp-237. Residue Ser-256 participates in 4-amino-2-methyl-5-(diphosphooxymethyl)pyrimidine binding. 2-[(2R,5Z)-2-carboxy-4-methylthiazol-5(2H)-ylidene]ethyl phosphate is bound at residue Thr-282–Thr-284. Lys-285 provides a ligand contact to 4-amino-2-methyl-5-(diphosphooxymethyl)pyrimidine. Residue Gly-312 coordinates 2-[(2R,5Z)-2-carboxy-4-methylthiazol-5(2H)-ylidene]ethyl phosphate.

It belongs to the thiamine-phosphate synthase family. Mg(2+) serves as cofactor.

The enzyme catalyses 2-[(2R,5Z)-2-carboxy-4-methylthiazol-5(2H)-ylidene]ethyl phosphate + 4-amino-2-methyl-5-(diphosphooxymethyl)pyrimidine + 2 H(+) = thiamine phosphate + CO2 + diphosphate. The catalysed reaction is 2-(2-carboxy-4-methylthiazol-5-yl)ethyl phosphate + 4-amino-2-methyl-5-(diphosphooxymethyl)pyrimidine + 2 H(+) = thiamine phosphate + CO2 + diphosphate. It catalyses the reaction 4-methyl-5-(2-phosphooxyethyl)-thiazole + 4-amino-2-methyl-5-(diphosphooxymethyl)pyrimidine + H(+) = thiamine phosphate + diphosphate. It functions in the pathway cofactor biosynthesis; thiamine diphosphate biosynthesis; thiamine phosphate from 4-amino-2-methyl-5-diphosphomethylpyrimidine and 4-methyl-5-(2-phosphoethyl)-thiazole: step 1/1. Functionally, condenses 4-methyl-5-(beta-hydroxyethyl)thiazole monophosphate (THZ-P) and 2-methyl-4-amino-5-hydroxymethyl pyrimidine pyrophosphate (HMP-PP) to form thiamine monophosphate (TMP). The protein is Thiamine-phosphate synthase of Synechococcus sp. (strain CC9311).